The following is a 504-amino-acid chain: MNIKPEEITSIIRQQIENFNTNIETIDSGTIIQIGDGIARVYGLEDCMEGELIEFPNDVYGMALNLEQDNVGCVLLGSEEGIKEGNVVKRTKKVVEVPVGEALVGRVVNSLGMPIDGKGPVLTTETRDVEVPAPGVIDRQSVKEPLQTGIKAIDSMIPIGKGQRELIIGDRQTGKTAIAMDTILNQKGKDVICIYVAIGQKQSTVAHIVNDLTKMGAMDYTIVVSSTASDSAPLQYLAPYAGCSMGEYFMHKGKDVLIVYDDLSKHAVAYRTMSLLLRRPPGREAYPGDVFYLHSRLLERSARLSEKLGGGSLTALPIVETLAGDVTAYIPTNVISITDGQIFLESELFNAGQRPAVNAGISVSRVGGNAQIKAMKQVAGTLRLELAQYRELAAFSQFGSDLDKESVKRLEKGKRLVEILKQPQYSPMPVEKEIIILYAAVSNHLIDIPVNKIKEFEKELFNYIDTHYRDIGKDILEHKQLTDELKSKLDKAINDFKNVFLSEI.

169–176 (GDRQTGKT) is a binding site for ATP.

The protein belongs to the ATPase alpha/beta chains family. As to quaternary structure, F-type ATPases have 2 components, CF(1) - the catalytic core - and CF(0) - the membrane proton channel. CF(1) has five subunits: alpha(3), beta(3), gamma(1), delta(1), epsilon(1). CF(0) has three main subunits: a(1), b(2) and c(9-12). The alpha and beta chains form an alternating ring which encloses part of the gamma chain. CF(1) is attached to CF(0) by a central stalk formed by the gamma and epsilon chains, while a peripheral stalk is formed by the delta and b chains.

It localises to the cell membrane. The enzyme catalyses ATP + H2O + 4 H(+)(in) = ADP + phosphate + 5 H(+)(out). Its function is as follows. Produces ATP from ADP in the presence of a proton gradient across the membrane. The alpha chain is a regulatory subunit. The polypeptide is ATP synthase subunit alpha (Clostridium botulinum (strain ATCC 19397 / Type A)).